Consider the following 231-residue polypeptide: Large ribosomal subunit protein uL1 (231 aa).

This sequence belongs to the universal ribosomal protein uL1 family. Part of the 50S ribosomal subunit.

Functionally, binds directly to 23S rRNA. The L1 stalk is quite mobile in the ribosome, and is involved in E site tRNA release. Its function is as follows. Protein L1 is also a translational repressor protein, it controls the translation of the L11 operon by binding to its mRNA. The sequence is that of Large ribosomal subunit protein uL1 from Gluconacetobacter diazotrophicus (strain ATCC 49037 / DSM 5601 / CCUG 37298 / CIP 103539 / LMG 7603 / PAl5).